Consider the following 214-residue polypeptide: Redox-sensing transcriptional repressor Rex (214 aa).

Positions 17 to 56 (KYHRYLEELLKSDVDRISSKELSEKIGFTASQIRQDLNCF) form a DNA-binding region, H-T-H motif. 91 to 96 (GAGNIG) provides a ligand contact to NAD(+).

The protein belongs to the transcriptional regulatory Rex family. As to quaternary structure, homodimer.

It localises to the cytoplasm. Functionally, modulates transcription in response to changes in cellular NADH/NAD(+) redox state. The protein is Redox-sensing transcriptional repressor Rex of Clostridium acetobutylicum (strain ATCC 824 / DSM 792 / JCM 1419 / IAM 19013 / LMG 5710 / NBRC 13948 / NRRL B-527 / VKM B-1787 / 2291 / W).